Consider the following 1169-residue polypeptide: Chromosome partition protein Smc (1169 aa).

Residue 32–39 participates in ATP binding; it reads PNGCGKSN. Coiled-coil stretches lie at residues 170 to 507 and 659 to 1030; these read ISKY…ALGE and REQQ…FQSL.

It belongs to the SMC family. Homodimer.

It localises to the cytoplasm. Functionally, required for chromosome condensation and partitioning. The protein is Chromosome partition protein Smc of Coxiella burnetii (strain RSA 493 / Nine Mile phase I).